A 950-amino-acid chain; its full sequence is METGGLPLELWRMILAYLHLPDLGRCSLVCRAWYELILSLDSTRWRQLCLGCTECRHPNWPNQPDVEPESWREAFKQHYLASKTWTKNALDLESSICFSLFRRKKERRTLSVGPGHEFDSLGSALAMASLYDRIVLFPGVYEEQGEIILKVPVEIVGQGKLGEVALLASIDQHCSTTRVCNLVFMPAWFSPIMYKTTSGHIQFDNCNFENGHIQVHGPGTCQVKFCTFKNTHVFLHNVPLCMLENCEFVGSENNCVTVEGHPSADKNWAYKYLLGLIKSSPIFLPAEDHDFLMSLDLESRDQAWSPRTCDIVIEGSQSPTSPVCSSPKPGSKEAEVGSDGERVAQTPDSSDGGLSPSGEDEDDEQLTYRLSYQVQGPRPVLGGSFLGPPLPGASIQLPSCLVLNSLHQELQKDKEAMALASSVQGCLIRKCLFRDGKGGVFVCSYGRAKMEGNVFRNLTYAVRCIHNSKIVMLRNDIYRCRASGIFLRLEGGGLIAGNNIYHNAEAGVDIRKKSNPLILCNQIHHGLRSGIVVLGNGKGVIRNNQIFSNKEAGIYILYHGNPIVSGNHIFKGRAAGIAVNENGKGLITENVIRENQWGGVDIRRGGVPILRSNLICFGYSDGVVVGDEGKGLIEGNTIYANKGCGVWMMSSSLPHVTSNHVSYNGLYGVAVFSQKDGEFPGGHGAQENFSEDGDAILWEAELEKEDDPLRRPITVALVESNSINHNGASGIFVQSSEALQVVANVIHANGDRGITIVQSSQLTRVANNSISCNRQSGVKVEFQCKVELRGNGIYDNRGHGIITKGDGTAVVENDIIGNRGSGLQLLPRSDTKVLKNRIHSFRAYGIAVRGRVKALVQENIIFQGKTNKTIFQQITNNRECIMQNNKFLVFKKKSDTWRLVNPPARPHLENSLRGSSAAHSGHKVTAMATRITARVEGGYHSNRSIFCTIL.

Positions 1–48 (METGGLPLELWRMILAYLHLPDLGRCSLVCRAWYELILSLDSTRWRQL) constitute an F-box domain. PbH1 repeat units follow at residues 198–217 (SGHI…QVHG) and 238–260 (VPLC…TVEG). A disordered region spans residues 313–364 (IEGSQSPTSPVCSSPKPGSKEAEVGSDGERVAQTPDSSDGGLSPSGEDEDDE). The span at 315-324 (GSQSPTSPVC) shows a compositional bias: polar residues. A phosphoserine mark is found at Ser321 and Ser326. The segment covering 330 to 342 (GSKEAEVGSDGER) has biased composition (basic and acidic residues). Positions 347–357 (PDSSDGGLSPS) are enriched in low complexity. 15 PbH1 repeats span residues 423–444 (VQGC…FVCS), 467–489 (NSKI…FLRL), 490–512 (EGGG…DIRK), 513–535 (KSNP…VVLG), 536–558 (NGKG…YILY), 559–581 (HGNP…AVNE), 582–604 (NGKG…DIRR), 605–627 (GGVP…VVGD), 628–650 (EGKG…WMMS), 651–673 (SSLP…AVFS), 713–735 (ITVA…FVQS), 736–758 (SEAL…TIVQ), 760–782 (SQLT…KVEF), 783–805 (QCKV…ITKG), and 828–850 (RSDT…AVRG).

In terms of assembly, component of the SCF(FBXO10) complex consisting of CUL1, SKP1 and FBXO10. Interacts with BCL2. Interacts with PRDM1. As to expression, particularly highly expressed in B-cells.

It is found in the cytoplasm. The protein operates within protein modification; protein ubiquitination. Functionally, substrate-recognition component of the SCF (SKP1-CUL1-F-box protein)-type E3 ubiquitin ligase complex. Mediates the ubiquitination and degradation of BCL2, an antiapoptotic protein, thereby playing a role in apoptosis by controlling the stability of BCL2. Targets also the receptor for advanced glycation end products RAGE for ubiquitination and subsequent lysosomal degradation. Directly controls HGAL/GCSAM ubiquitination and degradation and thereby decreases BCR signaling. This is F-box only protein 10 (Fbxo10) from Mus musculus (Mouse).